A 358-amino-acid polypeptide reads, in one-letter code: Insulin gene enhancer protein isl-2b (358 aa).

2 consecutive LIM zinc-binding domains span residues C27 to D80 and C89 to H143. The segment at residues T191–S250 is a DNA-binding region (homeobox). A compositionally biased stretch (low complexity) spans E325–S335. The tract at residues E325–T358 is disordered. The span at D336 to T358 shows a compositional bias: polar residues.

The protein localises to the nucleus. Functionally, binds to one of the cis-acting domain of the insulin gene enhancer. May be involved in the regional specification of the myotome and also in target recognition by the caudal primary neuron. This is Insulin gene enhancer protein isl-2b (isl2b) from Danio rerio (Zebrafish).